The following is a 397-amino-acid chain: Enoyl-[acyl-carrier-protein] reductase [NADH] (397 aa).

NAD(+) contacts are provided by residues 48–53, 74–75, 111–112, and 139–140; these read GASTGY, FE, DA, and VA. Position 225 (tyrosine 225) interacts with substrate. Tyrosine 235 serves as the catalytic Proton donor. Residues lysine 244 and 273–275 contribute to the NAD(+) site; that span reads VVT.

It belongs to the TER reductase family. In terms of assembly, monomer.

It carries out the reaction a 2,3-saturated acyl-[ACP] + NAD(+) = a (2E)-enoyl-[ACP] + NADH + H(+). It participates in lipid metabolism; fatty acid biosynthesis. In terms of biological role, involved in the final reduction of the elongation cycle of fatty acid synthesis (FAS II). Catalyzes the reduction of a carbon-carbon double bond in an enoyl moiety that is covalently linked to an acyl carrier protein (ACP). The protein is Enoyl-[acyl-carrier-protein] reductase [NADH] of Burkholderia pseudomallei (strain K96243).